A 654-amino-acid polypeptide reads, in one-letter code: Translation factor GUF1, mitochondrial (654 aa).

One can recognise a tr-type G domain in the interval 57–237 (ENYRNFSIVA…SVIKNIPSPV (181 aa)). GTP contacts are provided by residues 66-73 (AHVDHGKS), 130-134 (DTPGH), and 184-187 (NKID).

The protein belongs to the TRAFAC class translation factor GTPase superfamily. Classic translation factor GTPase family. LepA subfamily.

It is found in the mitochondrion inner membrane. It carries out the reaction GTP + H2O = GDP + phosphate + H(+). Its function is as follows. Promotes mitochondrial protein synthesis. May act as a fidelity factor of the translation reaction, by catalyzing a one-codon backward translocation of tRNAs on improperly translocated ribosomes. Binds to mitochondrial ribosomes in a GTP-dependent manner. In Candida albicans (strain WO-1) (Yeast), this protein is Translation factor GUF1, mitochondrial.